The chain runs to 185 residues: Elongation factor P (185 aa).

The protein belongs to the elongation factor P family.

It is found in the cytoplasm. It functions in the pathway protein biosynthesis; polypeptide chain elongation. Its function is as follows. Involved in peptide bond synthesis. Stimulates efficient translation and peptide-bond synthesis on native or reconstituted 70S ribosomes in vitro. Probably functions indirectly by altering the affinity of the ribosome for aminoacyl-tRNA, thus increasing their reactivity as acceptors for peptidyl transferase. The protein is Elongation factor P of Syntrophomonas wolfei subsp. wolfei (strain DSM 2245B / Goettingen).